Consider the following 466-residue polypeptide: 3-isopropylmalate dehydratase large subunit (466 aa).

Residues cysteine 349, cysteine 410, and cysteine 413 each coordinate [4Fe-4S] cluster.

This sequence belongs to the aconitase/IPM isomerase family. LeuC type 1 subfamily. In terms of assembly, heterodimer of LeuC and LeuD. The cofactor is [4Fe-4S] cluster.

The enzyme catalyses (2R,3S)-3-isopropylmalate = (2S)-2-isopropylmalate. The protein operates within amino-acid biosynthesis; L-leucine biosynthesis; L-leucine from 3-methyl-2-oxobutanoate: step 2/4. Its function is as follows. Catalyzes the isomerization between 2-isopropylmalate and 3-isopropylmalate, via the formation of 2-isopropylmaleate. This chain is 3-isopropylmalate dehydratase large subunit, found in Vesicomyosocius okutanii subsp. Calyptogena okutanii (strain HA).